A 165-amino-acid chain; its full sequence is UPF0303 protein Bphy_1660 (165 aa).

Belongs to the UPF0303 family.

The polypeptide is UPF0303 protein Bphy_1660 (Paraburkholderia phymatum (strain DSM 17167 / CIP 108236 / LMG 21445 / STM815) (Burkholderia phymatum)).